The sequence spans 564 residues: Type 2 DNA topoisomerase 6 subunit B (564 aa).

ATP contacts are provided by residues Asn-46, Asp-78, 99-100, 109-116, and Lys-471; these read TK and GQQGIGIS.

Belongs to the TOP6B family. As to quaternary structure, homodimer. Heterotetramer of two Top6A and two Top6B chains.

It catalyses the reaction ATP-dependent breakage, passage and rejoining of double-stranded DNA.. Its function is as follows. Relaxes both positive and negative superturns and exhibits a strong decatenase activity. This chain is Type 2 DNA topoisomerase 6 subunit B, found in Pyrococcus horikoshii (strain ATCC 700860 / DSM 12428 / JCM 9974 / NBRC 100139 / OT-3).